The primary structure comprises 748 residues: Catalase-peroxidase (748 aa).

Residues 92-238 (WHSAGTYRTG…LAAVQMGLIY (147 aa)) constitute a cross-link (tryptophyl-tyrosyl-methioninium (Trp-Tyr) (with M-264)). His-93 functions as the Proton acceptor in the catalytic mechanism. Residues 238 to 264 (YVNPEGPDGNPDPLLAAKDIRDTFGRM) constitute a cross-link (tryptophyl-tyrosyl-methioninium (Tyr-Met) (with W-92)). His-279 contacts heme b.

It belongs to the peroxidase family. Peroxidase/catalase subfamily. Homodimer or homotetramer. Requires heme b as cofactor. In terms of processing, formation of the three residue Trp-Tyr-Met cross-link is important for the catalase, but not the peroxidase activity of the enzyme.

The catalysed reaction is H2O2 + AH2 = A + 2 H2O. It catalyses the reaction 2 H2O2 = O2 + 2 H2O. In terms of biological role, bifunctional enzyme with both catalase and broad-spectrum peroxidase activity. The chain is Catalase-peroxidase from Xanthomonas campestris pv. campestris (strain 8004).